Here is a 518-residue protein sequence, read N- to C-terminus: Phosphoacetylglucosamine mutase 1 (518 aa).

At Thr49 the chain carries Phosphothreonine. Ser51 functions as the Phosphoserine intermediate in the catalytic mechanism. 4 residues coordinate Mg(2+): Ser51, Asp267, Asp269, and Asp271. Ser51 is subject to Phosphoserine. Substrate contacts are provided by residues 360 to 362 (EAN), 486 to 490 (RASGT), and Arg495.

The protein belongs to the phosphohexose mutase family. It depends on Mg(2+) as a cofactor.

Its subcellular location is the cytoplasm. It is found in the nucleus. It catalyses the reaction N-acetyl-alpha-D-glucosamine 1-phosphate = N-acetyl-D-glucosamine 6-phosphate. The protein operates within nucleotide-sugar biosynthesis; UDP-N-acetyl-alpha-D-glucosamine biosynthesis; N-acetyl-alpha-D-glucosamine 1-phosphate from alpha-D-glucosamine 6-phosphate (route I): step 2/2. Its function is as follows. Catalyzes the conversion of GlcNAc-6-P into GlcNAc-1-P during the synthesis of uridine diphosphate/UDP-GlcNAc, which is a biosynthetic precursor of chitin and also supplies the amino sugars for N-linked oligosaccharides of glycoproteins. The chain is Phosphoacetylglucosamine mutase 1 from Schizosaccharomyces pombe (strain 972 / ATCC 24843) (Fission yeast).